The chain runs to 1070 residues: DNA-directed RNA polymerase subunit beta (1070 aa).

It belongs to the RNA polymerase beta chain family. In plastids the minimal PEP RNA polymerase catalytic core is composed of four subunits: alpha, beta, beta', and beta''. When a (nuclear-encoded) sigma factor is associated with the core the holoenzyme is formed, which can initiate transcription.

Its subcellular location is the plastid. The protein localises to the chloroplast. The enzyme catalyses RNA(n) + a ribonucleoside 5'-triphosphate = RNA(n+1) + diphosphate. DNA-dependent RNA polymerase catalyzes the transcription of DNA into RNA using the four ribonucleoside triphosphates as substrates. The sequence is that of DNA-directed RNA polymerase subunit beta from Solanum tuberosum (Potato).